Reading from the N-terminus, the 937-residue chain is Protein translocase subunit SecA (937 aa).

Residues Gln-87, 105–109 (GEGKT), and Asp-494 contribute to the ATP site. The tract at residues 881-937 (RGLNYIGPDEGGRASVHSDAEEYGGGTPAAAGTRRERREAARAEGKGKRGPKSRRKH) is disordered. 2 stretches are compositionally biased toward basic and acidic residues: residues 890 to 900 (EGGRASVHSDA) and 913 to 927 (TRRE…EGKG). Residues 928-937 (KRGPKSRRKH) show a composition bias toward basic residues.

Belongs to the SecA family. As to quaternary structure, monomer and homodimer. Part of the essential Sec protein translocation apparatus which comprises SecA, SecYEG and auxiliary proteins SecDF. Other proteins may also be involved.

It localises to the cell membrane. The protein localises to the cytoplasm. It catalyses the reaction ATP + H2O + cellular proteinSide 1 = ADP + phosphate + cellular proteinSide 2.. Part of the Sec protein translocase complex. Interacts with the SecYEG preprotein conducting channel. Has a central role in coupling the hydrolysis of ATP to the transfer of proteins into and across the cell membrane, serving as an ATP-driven molecular motor driving the stepwise translocation of polypeptide chains across the membrane. The polypeptide is Protein translocase subunit SecA (Nocardia farcinica (strain IFM 10152)).